The sequence spans 171 residues: S-ribosylhomocysteine lyase (171 aa).

The Fe cation site is built by histidine 54, histidine 58, and cysteine 128.

The protein belongs to the LuxS family. As to quaternary structure, homodimer. The cofactor is Fe cation.

The enzyme catalyses S-(5-deoxy-D-ribos-5-yl)-L-homocysteine = (S)-4,5-dihydroxypentane-2,3-dione + L-homocysteine. Its function is as follows. Involved in the synthesis of autoinducer 2 (AI-2) which is secreted by bacteria and is used to communicate both the cell density and the metabolic potential of the environment. The regulation of gene expression in response to changes in cell density is called quorum sensing. Catalyzes the transformation of S-ribosylhomocysteine (RHC) to homocysteine (HC) and 4,5-dihydroxy-2,3-pentadione (DPD). The protein is S-ribosylhomocysteine lyase of Citrobacter koseri (strain ATCC BAA-895 / CDC 4225-83 / SGSC4696).